Consider the following 187-residue polypeptide: GTPase KRas (187 aa).

Residues 10–18 (GAVGVGKSA), 29–35 (VDEYDPT), 59–60 (AG), and 116–119 (NKCA) each bind GTP. Positions 32-40 (YDPTIEDSY) match the Effector region motif. The disordered stretch occupies residues 168–187 (EKMSKDGKKKKKSKTKCSIL). A Cysteine methyl ester modification is found at Cys184. Residue Cys184 is the site of S-farnesyl cysteine attachment. Positions 185–187 (SIL) are cleaved as a propeptide — removed in mature form.

It belongs to the small GTPase superfamily. Ras family.

It is found in the cell membrane. It localises to the cytoplasm. The enzyme catalyses GTP + H2O = GDP + phosphate + H(+). Alternates between an inactive form bound to GDP and an active form bound to GTP. Activated by a guanine nucleotide-exchange factor (GEF) and inactivated by a GTPase-activating protein (GAP). Functionally, ras proteins bind GDP/GTP and possess intrinsic GTPase activity. Plays an important role in the regulation of cell proliferation. The chain is GTPase KRas (kras) from Xenopus laevis (African clawed frog).